Consider the following 332-residue polypeptide: Formamidase (332 aa).

Residues 14–259 (FLTALIQYPV…WEIVTAEVYP (246 aa)) enclose the CN hydrolase domain. The active-site Proton acceptor is glutamate 60. The active-site Proton donor is the lysine 132. Cysteine 165 serves as the catalytic Nucleophile.

It belongs to the carbon-nitrogen hydrolase superfamily. Aliphatic amidase family.

It catalyses the reaction formamide + H2O = formate + NH4(+). Functionally, is an aliphatic amidase with a restricted substrate specificity, as it only hydrolyzes formamide. The sequence is that of Formamidase from Bacillus thuringiensis (strain Al Hakam).